The chain runs to 344 residues: rRNA 2'-O-methyltransferase fibrillarin (344 aa).

The interval 1-113 (MGKPGFSPRG…GFKGGKTVTI (113 aa)) is disordered. The span at 8 to 107 (PRGGGGGGGG…RGGGAGGFKG (100 aa)) shows a compositional bias: gly residues. 15 positions are modified to asymmetric dimethylarginine: R9, R23, R25, R40, R42, R48, R51, R58, R63, R71, R77, R83, R88, R93, and R98. Residues 197 to 198 (TT), 216 to 217 (EF), 241 to 242 (DA), and 261 to 264 (DVAQ) each bind S-adenosyl-L-methionine.

It belongs to the methyltransferase superfamily. Fibrillarin family. As to quaternary structure, component of box C/D small nucleolar ribonucleoprotein (snoRNP) particles. It is associated with the U3, U8 and U13 small nuclear RNAs. Post-translationally, by homology to other fibrillarins, some or all of the N-terminal domain arginines are modified to asymmetric dimethylarginine (DMA).

It localises to the nucleus. The protein resides in the nucleolus. The enzyme catalyses L-glutaminyl-[histone H2A] + S-adenosyl-L-methionine = N(5)-methyl-L-glutaminyl-[histone H2A] + S-adenosyl-L-homocysteine + H(+). S-adenosyl-L-methionine-dependent methyltransferase that has the ability to methylate both RNAs and proteins. Involved in pre-rRNA processing. Utilizes the methyl donor S-adenosyl-L-methionine to catalyze the site-specific 2'-hydroxyl methylation of ribose moieties in pre-ribosomal RNA. Site specificity is provided by a guide RNA that base pairs with the substrate. Methylation occurs at a characteristic distance from the sequence involved in base pairing with the guide RNA. Also acts as a protein methyltransferase by mediating methylation of 'Gln-105' of histone H2A (H2AQ105me), a modification that impairs binding of the FACT complex and is specifically present at 35S ribosomal DNA locus. The chain is rRNA 2'-O-methyltransferase fibrillarin from Drosophila melanogaster (Fruit fly).